A 312-amino-acid polypeptide reads, in one-letter code: Plasminogen activator (312 aa).

The first 20 residues, M1 to A20, serve as a signal peptide directing secretion. Residues A21 to P31 are Periplasmic-facing. A beta stranded membrane pass occupies residues D32–T40. The Extracellular portion of the chain corresponds to G41–V70. Residues A71–D80 form a beta stranded membrane-spanning segment. The Periplasmic portion of the chain corresponds to P81–F84. A beta stranded membrane pass occupies residues L85–S94. Over L95 to E131 the chain is Extracellular. Residues D104 and D106 contribute to the active site. A beta stranded transmembrane segment spans residues Y132–L140. Over L141 to N145 the chain is Periplasmic. A beta stranded membrane pass occupies residues Y146–Y154. Residues Q155 to M194 lie on the Extracellular side of the membrane. The beta stranded transmembrane segment at P195–R204 threads the bilayer. Over I205 to D207 the chain is Periplasmic. A beta stranded membrane pass occupies residues F208 to F216. Topologically, residues S217–Y244 are extracellular. Active-site residues include D226 and H228. The beta stranded transmembrane segment at Y245–V255 threads the bilayer. The Periplasmic portion of the chain corresponds to T256–N258. The chain crosses the membrane as a beta stranded span at residues A259 to Y267. At S268–N301 the chain is on the extracellular side. A beta stranded transmembrane segment spans residues Y302 to F312.

This sequence belongs to the peptidase A26 family.

Its subcellular location is the cell outer membrane. The catalysed reaction is Converts human Glu-plasminogen to plasmin by cleaving the 560-Arg-|-Val-561 peptide bond that is also hydrolyzed by the mammalian u-plasminogen activator and t-plasminogen activator. Also cleaves arginyl bonds in other proteins.. With respect to regulation, requires bacterial lipopolysaccharide (LPS) for activation; addition of LPS to inactive protein reactivates it. In the absence of LPS the active site groove is slightly narrower, and peptide substrate binds deep within the active site groove, displacing the nucleophilic water molecule. In terms of biological role, in the mammalian host activates (cleaves) plasminogen to generate the serine protease plasmin. Plasmin degrades fibrin clots (fibrinolysis) and facilitates bacterial cell migration, enabling rapid dissemination of bacteria from the initial site of infection. Cleaves host plasminogen to generate plasmin and probably also has autocatalytic activity. Fibrinolytic activity prevails at 37 degrees Celsius whereas coagulase expression predominates at lower temperatures (28 degrees Celsius). Cleaves plasminogen; plasminogen cleavage is much higher than coagulase activity. The sequence is that of Plasminogen activator from Yersinia pestis.